The chain runs to 152 residues: Nucleoside diphosphate kinase A (152 aa).

ATP is bound by residues K12, F60, R88, and T94. K100 is covalently cross-linked (Glycyl lysine isopeptide (Lys-Gly) (interchain with G-Cter in ubiquitin)). ATP is bound by residues R105 and N115. The Pros-phosphohistidine intermediate role is filled by H118. Residues S120, S122, and S125 each carry the phosphoserine modification.

This sequence belongs to the NDK family. In terms of assembly, hexamer of two different chains: An and B (A6, A5B, A4B2, A3B3, A2B4, AB5, B6). Interacts with PRUNE1. Component of the SET complex, composed of at least ANP32A, APEX1, HMGB2, NME1, SET and TREX1. Within this complex, interacts directly with SET. Also interacts with TREX1, but only following translocation to the nucleus. The cofactor is Mg(2+).

It is found in the cytoplasm. The protein resides in the nucleus. It carries out the reaction a 2'-deoxyribonucleoside 5'-diphosphate + ATP = a 2'-deoxyribonucleoside 5'-triphosphate + ADP. It catalyses the reaction a ribonucleoside 5'-diphosphate + ATP = a ribonucleoside 5'-triphosphate + ADP. Its activity is regulated as follows. Autophosphorylation at His-118 increases serine/threonine protein kinase activity of the enzyme. Interaction with the SET complex inhibits exonuclease activity. Functionally, major role in the synthesis of nucleoside triphosphates other than ATP. The ATP gamma phosphate is transferred to the NDP beta phosphate via a ping-pong mechanism, using a phosphorylated active-site intermediate. Possesses nucleoside-diphosphate kinase, serine/threonine-specific protein kinase, geranyl and farnesyl pyrophosphate kinase, histidine protein kinase and 3'-5' exonuclease activities. Involved in cell proliferation, differentiation and development, signal transduction, G protein-coupled receptor endocytosis, and gene expression. Required for neural development including neural patterning and cell fate determination. During GZMA-mediated cell death, works in concert with TREX1. NME1 nicks one strand of DNA and TREX1 removes bases from the free 3' end to enhance DNA damage and prevent DNA end reannealing and rapid repair. The sequence is that of Nucleoside diphosphate kinase A (NME1) from Canis lupus familiaris (Dog).